The primary structure comprises 334 residues: Aspartate carbamoyltransferase catalytic subunit (334 aa).

The carbamoyl phosphate site is built by arginine 71 and threonine 72. Residue lysine 99 coordinates L-aspartate. 3 residues coordinate carbamoyl phosphate: arginine 121, histidine 151, and glutamine 154. Positions 184 and 239 each coordinate L-aspartate. Residues glycine 280 and proline 281 each coordinate carbamoyl phosphate.

Belongs to the aspartate/ornithine carbamoyltransferase superfamily. ATCase family. Heterododecamer (2C3:3R2) of six catalytic PyrB chains organized as two trimers (C3), and six regulatory PyrI chains organized as three dimers (R2).

It catalyses the reaction carbamoyl phosphate + L-aspartate = N-carbamoyl-L-aspartate + phosphate + H(+). The protein operates within pyrimidine metabolism; UMP biosynthesis via de novo pathway; (S)-dihydroorotate from bicarbonate: step 2/3. Functionally, catalyzes the condensation of carbamoyl phosphate and aspartate to form carbamoyl aspartate and inorganic phosphate, the committed step in the de novo pyrimidine nucleotide biosynthesis pathway. The protein is Aspartate carbamoyltransferase catalytic subunit of Pseudomonas fluorescens biotype A.